A 186-amino-acid chain; its full sequence is Peptidyl-tRNA hydrolase (186 aa).

Residue Y14 coordinates tRNA. H19 functions as the Proton acceptor in the catalytic mechanism. TRNA contacts are provided by F65, N67, and N113.

It belongs to the PTH family. As to quaternary structure, monomer.

The protein resides in the cytoplasm. It carries out the reaction an N-acyl-L-alpha-aminoacyl-tRNA + H2O = an N-acyl-L-amino acid + a tRNA + H(+). Functionally, hydrolyzes ribosome-free peptidyl-tRNAs (with 1 or more amino acids incorporated), which drop off the ribosome during protein synthesis, or as a result of ribosome stalling. Catalyzes the release of premature peptidyl moieties from peptidyl-tRNA molecules trapped in stalled 50S ribosomal subunits, and thus maintains levels of free tRNAs and 50S ribosomes. This chain is Peptidyl-tRNA hydrolase, found in Limosilactobacillus reuteri (strain DSM 20016) (Lactobacillus reuteri).